The sequence spans 446 residues: Tubulin beta chain (446 aa).

GTP is bound by residues Gln-11, Glu-69, Ser-138, Gly-142, Thr-143, Gly-144, Asn-204, and Asn-226. Glu-69 contributes to the Mg(2+) binding site. The disordered stretch occupies residues 427 to 446 (EAGVDEGEEFEEEEDFGDEQ). Over residues 429–446 (GVDEGEEFEEEEDFGDEQ) the composition is skewed to acidic residues.

The protein belongs to the tubulin family. In terms of assembly, dimer of alpha and beta chains. A typical microtubule is a hollow water-filled tube with an outer diameter of 25 nm and an inner diameter of 15 nM. Alpha-beta heterodimers associate head-to-tail to form protofilaments running lengthwise along the microtubule wall with the beta-tubulin subunit facing the microtubule plus end conferring a structural polarity. Microtubules usually have 13 protofilaments but different protofilament numbers can be found in some organisms and specialized cells. Mg(2+) serves as cofactor.

The protein resides in the cytoplasm. The protein localises to the cytoskeleton. Tubulin is the major constituent of microtubules, a cylinder consisting of laterally associated linear protofilaments composed of alpha- and beta-tubulin heterodimers. Microtubules grow by the addition of GTP-tubulin dimers to the microtubule end, where a stabilizing cap forms. Below the cap, tubulin dimers are in GDP-bound state, owing to GTPase activity of alpha-tubulin. The protein is Tubulin beta chain of Giardia intestinalis (Giardia lamblia).